Consider the following 350-residue polypeptide: Proton-activated chloride channel (350 aa).

The disordered stretch occupies residues 1–51 (MEAIRKELSRSYQELNDETDPIARDPEGAQEEEQEEAASAVVPDRDSDRSN). Topologically, residues 1–63 (MEAIRKELSR…VHFSRTCLKN (63 aa)) are cytoplasmic. A helical membrane pass occupies residues 64–84 (VFSVLLIFVYLLLMGVAVFLV). Residues 85–297 (YQTITDFRDK…KDPYIQEIQD (213 aa)) are Extracellular-facing. A helical transmembrane segment spans residues 298–318 (IITANPWSMIALLCSVFLVLF). The Cytoplasmic segment spans residues 319 to 350 (KAADFAKLSVKWMIKVRRRHLKKRTRELNHIS).

The protein belongs to the proton-activated chloride channel family.

It is found in the cell membrane. The catalysed reaction is chloride(in) = chloride(out). Chloride channel gated by pH that facilitates the entry of chloride ions into cells upon exposure to extracellular acidic pH. This is Proton-activated chloride channel from Xenopus laevis (African clawed frog).